We begin with the raw amino-acid sequence, 540 residues long: Arylsulfatase K (540 aa).

The first 22 residues, 1–22 (MLLLWVSVVAASALAAPAPGAD), serve as a signal peptide directing secretion. Ca(2+)-binding residues include D44 and C84. C84 acts as the Nucleophile in catalysis. Position 84 is a 3-oxoalanine (Cys) (C84). N112 is a glycosylation site (N-linked (GlcNAc...) asparagine). Substrate is bound at residue K132. An N-linked (GlcNAc...) asparagine glycan is attached at N197. Substrate is bound at residue H255. The N-linked (GlcNAc...) asparagine glycan is linked to N266. Residues D317 and H318 each contribute to the Ca(2+) site. Residues N379, N417, and N502 are each glycosylated (N-linked (GlcNAc...) asparagine).

The protein belongs to the sulfatase family. Ca(2+) is required as a cofactor. The conversion to 3-oxoalanine (also known as C-formylglycine, FGly), of a serine or cysteine residue in prokaryotes and of a cysteine residue in eukaryotes, is critical for catalytic activity. Post-translationally, the 75-kDa precursor undergoes proteolytic processing to yield a 23 kDa form. In terms of processing, N-glycosylated with both high mannose and complex type sugars.

The protein localises to the secreted. The protein resides in the lysosome. It carries out the reaction an aryl sulfate + H2O = a phenol + sulfate + H(+). It catalyses the reaction Hydrolysis of the 2-sulfate groups of the 2-O-sulfo-D-glucuronate residues of chondroitin sulfate, heparin and heparitin sulfate.. Catalyzes the hydrolysis of pseudosubstrates such as p-nitrocatechol sulfate and p-nitrophenyl sulfate. Catalyzes the hydrolysis of the 2-sulfate groups of the 2-O-sulfo-D-glucuronate residues of chondroitin sulfate, heparin and heparitin sulfate. Acts selectively on 2-sulfoglucuronate and lacks activity against 2-sulfoiduronate. The sequence is that of Arylsulfatase K (ARSK) from Bos taurus (Bovine).